The chain runs to 432 residues: Gamma-glutamyl phosphate reductase (432 aa).

This sequence belongs to the gamma-glutamyl phosphate reductase family.

The protein localises to the cytoplasm. The catalysed reaction is L-glutamate 5-semialdehyde + phosphate + NADP(+) = L-glutamyl 5-phosphate + NADPH + H(+). The protein operates within amino-acid biosynthesis; L-proline biosynthesis; L-glutamate 5-semialdehyde from L-glutamate: step 2/2. Its function is as follows. Catalyzes the NADPH-dependent reduction of L-glutamate 5-phosphate into L-glutamate 5-semialdehyde and phosphate. The product spontaneously undergoes cyclization to form 1-pyrroline-5-carboxylate. This is Gamma-glutamyl phosphate reductase from Ruminiclostridium cellulolyticum (strain ATCC 35319 / DSM 5812 / JCM 6584 / H10) (Clostridium cellulolyticum).